We begin with the raw amino-acid sequence, 305 residues long: UDP-3-O-acyl-N-acetylglucosamine deacetylase (305 aa).

3 residues coordinate Zn(2+): His78, His237, and Asp241. Catalysis depends on His264, which acts as the Proton donor.

The protein belongs to the LpxC family. The cofactor is Zn(2+).

It carries out the reaction a UDP-3-O-[(3R)-3-hydroxyacyl]-N-acetyl-alpha-D-glucosamine + H2O = a UDP-3-O-[(3R)-3-hydroxyacyl]-alpha-D-glucosamine + acetate. It functions in the pathway glycolipid biosynthesis; lipid IV(A) biosynthesis; lipid IV(A) from (3R)-3-hydroxytetradecanoyl-[acyl-carrier-protein] and UDP-N-acetyl-alpha-D-glucosamine: step 2/6. Functionally, catalyzes the hydrolysis of UDP-3-O-myristoyl-N-acetylglucosamine to form UDP-3-O-myristoylglucosamine and acetate, the committed step in lipid A biosynthesis. In Burkholderia multivorans (strain ATCC 17616 / 249), this protein is UDP-3-O-acyl-N-acetylglucosamine deacetylase.